A 347-amino-acid polypeptide reads, in one-letter code: Uroporphyrinogen decarboxylase (347 aa).

Substrate-binding positions include 24–28, D74, Y145, S200, and H315; that span reads RQAGR.

It belongs to the uroporphyrinogen decarboxylase family. As to quaternary structure, homodimer.

Its subcellular location is the cytoplasm. It catalyses the reaction uroporphyrinogen III + 4 H(+) = coproporphyrinogen III + 4 CO2. It functions in the pathway porphyrin-containing compound metabolism; protoporphyrin-IX biosynthesis; coproporphyrinogen-III from 5-aminolevulinate: step 4/4. Functionally, catalyzes the decarboxylation of four acetate groups of uroporphyrinogen-III to yield coproporphyrinogen-III. The sequence is that of Uroporphyrinogen decarboxylase from Hydrogenobaculum sp. (strain Y04AAS1).